The following is a 492-amino-acid chain: Cytochrome P450 2B12 (492 aa).

S129 bears the Phosphoserine mark. C437 contributes to the heme binding site.

The protein belongs to the cytochrome P450 family. Requires heme as cofactor. As to expression, preputial gland, but not in liver.

Its subcellular location is the endoplasmic reticulum membrane. The protein localises to the microsome membrane. The catalysed reaction is an organic molecule + reduced [NADPH--hemoprotein reductase] + O2 = an alcohol + oxidized [NADPH--hemoprotein reductase] + H2O + H(+). Cytochromes P450 are a group of heme-thiolate monooxygenases. In liver microsomes, this enzyme is involved in an NADPH-dependent electron transport pathway. This isozyme seems responsible for metabolism of 2,2',4,4',5,5'-hexachlorobiphenyl. This is Cytochrome P450 2B12 (Cyp2b12) from Rattus norvegicus (Rat).